Here is a 684-residue protein sequence, read N- to C-terminus: Protein EXECUTER 1, chloroplastic (684 aa).

Polar residues predominate over residues 1–31 (MPSLSTPPSQNLAFSPAASATSSRLTPSSKR). Residues 1–46 (MPSLSTPPSQNLAFSPAASATSSRLTPSSKRSFYPHRLPDPTALCR) constitute a chloroplast transit peptide. Positions 1 to 66 (MPSLSTPPSQ…SSSSSDDNPR (66 aa)) are disordered. Residues 48–61 (SSSSGSNSSSSSSS) show a composition bias toward low complexity. One can recognise a UVR domain in the interval 127 to 162 (DRLLSVLKSQLNRAIKREDYEDAARLKVAIAATATN). The segment at 278 to 318 (TLTPGRFLTSPGRKEDTGNLAVESSEDEESDNSDDDSDLLE) is disordered. The segment covering 301–318 (SSEDEESDNSDDDSDLLE) has biased composition (acidic residues).

It localises to the plastid. The protein resides in the chloroplast. Its function is as follows. Together with EX2, enables higher plants to perceive singlet oxygen as a stress signal in plastid that activates a genetically determined nuclear stress response program which triggers a programmed cell death (PCD). This transfer of singlet oxygen-induced stress-related signals from the plastid to the nucleus that triggers genetically controlled PCD pathway is unique to photosynthetic eukaryotes and operates under mild stress conditions, impeding photosystem II (PSII) without causing photooxidative damage of the plant. The polypeptide is Protein EXECUTER 1, chloroplastic (Arabidopsis thaliana (Mouse-ear cress)).